We begin with the raw amino-acid sequence, 153 residues long: Ribosome maturation factor RimP (153 aa).

The protein belongs to the RimP family.

Its subcellular location is the cytoplasm. Its function is as follows. Required for maturation of 30S ribosomal subunits. The protein is Ribosome maturation factor RimP of Clostridium botulinum (strain 657 / Type Ba4).